The following is a 288-amino-acid chain: uncharacterized protein (288 aa).

This is an uncharacterized protein from Haemophilus influenzae (strain ATCC 51907 / DSM 11121 / KW20 / Rd).